Reading from the N-terminus, the 256-residue chain is Isoprenyl transferase (256 aa).

The active site involves aspartate 33. Position 33 (aspartate 33) interacts with Mg(2+). Substrate-binding positions include 34–37 (GNGR), tryptophan 38, arginine 46, histidine 50, and 78–80 (STE). Residue asparagine 81 is the Proton acceptor of the active site. Substrate-binding positions include tryptophan 82, arginine 84, arginine 201, and 207–209 (RIS). Position 220 (glutamate 220) interacts with Mg(2+).

The protein belongs to the UPP synthase family. As to quaternary structure, homodimer. It depends on Mg(2+) as a cofactor.

Catalyzes the condensation of isopentenyl diphosphate (IPP) with allylic pyrophosphates generating different type of terpenoids. The polypeptide is Isoprenyl transferase (Staphylococcus aureus (strain Mu50 / ATCC 700699)).